The chain runs to 351 residues: Rhodopsin (351 aa).

The Extracellular portion of the chain corresponds to 1 to 36; that stretch reads MNGTEGQDFYVPMSNKTGVVRSPFEYPQYYLAEPWK. 2 N-linked (GlcNAc...) asparagine glycosylation sites follow: N2 and N15. The chain crosses the membrane as a helical span at residues 37–61; sequence FSALAAYMFMLILLGFPVNFLTLYV. The Cytoplasmic segment spans residues 62–73; the sequence is TIQHKKLRTPLN. Residues 74-96 form a helical membrane-spanning segment; that stretch reads YILLNLVVADLFMVFGGFTTTMY. Topologically, residues 97–110 are extracellular; sequence TSMNGYFVFGVTGC. A disulfide bridge connects residues C110 and C187. Residues 111 to 133 traverse the membrane as a helical segment; the sequence is YIEGFFATLGGEIALWSLVVLAV. The 'Ionic lock' involved in activated form stabilization signature appears at 134 to 136; it reads ERY. Topologically, residues 134 to 152 are cytoplasmic; it reads ERYVVVCKPMSNFRFGENH. Residues 153-173 form a helical membrane-spanning segment; sequence AIMGVAFSWIMAMACAAPPLF. Residues 174-202 are Extracellular-facing; sequence GWSRYIPEGMQCSCGIDYYTLKPEINNES. Residues 203–224 traverse the membrane as a helical segment; the sequence is FVIYMFVVHFMIPLAVIFFCYG. At 225–252 the chain is on the cytoplasmic side; that stretch reads NLVCTVKEAAAQQQESATTQKAEKEVTR. Residues 253 to 274 traverse the membrane as a helical segment; the sequence is MVIIMVIAFLICWVPYASVAFY. The Extracellular segment spans residues 275-286; the sequence is IFTNQGSDFGPI. A helical transmembrane segment spans residues 287 to 308; that stretch reads FMTIPAFFAKSSAIYNPVIYIV. An N6-(retinylidene)lysine modification is found at K296. The Cytoplasmic portion of the chain corresponds to 309 to 351; the sequence is MNKQFRNCMITTLCCGKNPLGDEDTSAGKTETSSVSTSQVSPA. S-palmitoyl cysteine attachment occurs at residues C322 and C323. The interval 331–351 is disordered; that stretch reads EDTSAGKTETSSVSTSQVSPA. A compositionally biased stretch (low complexity) spans 340 to 351; sequence TSSVSTSQVSPA. Phosphoserine; by RK and GRK7 is present on S341.

This sequence belongs to the G-protein coupled receptor 1 family. Opsin subfamily. Post-translationally, contains one covalently linked retinal chromophore. Upon light absorption, the covalently bound 11-cis-retinal is converted to all-trans-retinal. After hydrolysis of the Schiff base and release of the covalently bound all-trans-retinal, active rhodopsin is regenerated by binding of a fresh molecule of 11-cis-retinal.

Its subcellular location is the membrane. The protein localises to the cell projection. The protein resides in the cilium. It is found in the photoreceptor outer segment. In terms of biological role, photoreceptor required for image-forming vision at low light intensity. Required for photoreceptor cell viability after birth. Light-induced isomerization of 11-cis to all-trans retinal triggers a conformational change that activates signaling via G-proteins. Subsequent receptor phosphorylation mediates displacement of the bound G-protein alpha subunit by arrestin and terminates signaling. The sequence is that of Rhodopsin (RHO) from Gallus gallus (Chicken).